The primary structure comprises 98 residues: Small ribosomal subunit protein bS20 (98 aa).

The span at 1-12 shows a compositional bias: basic residues; sequence MAPRKPSKKVGP. A disordered region spans residues 1 to 34; that stretch reads MAPRKPSKKVGPQKRPSAEKRVITSKKKQLRNQS.

The protein belongs to the bacterial ribosomal protein bS20 family.

Binds directly to 16S ribosomal RNA. In Chlamydia muridarum (strain MoPn / Nigg), this protein is Small ribosomal subunit protein bS20.